The primary structure comprises 297 residues: ER membrane protein complex subunit 2-B (297 aa).

TPR repeat units lie at residues 87-120 (HRVKRLTGLRFEAMERYDDALQIYDRILQDDPTN), 155-188 (QEAWHELAELYINELDYAKAAFCLEELILTNPHN), and 192-225 (YQQFAEVKYTQGGLENLELSRKYFSQALKLNNHS).

This sequence belongs to the EMC2 family. Component of the ER membrane protein complex (EMC).

It is found in the endoplasmic reticulum membrane. Its function is as follows. Part of the endoplasmic reticulum membrane protein complex (EMC) that enables the energy-independent insertion into endoplasmic reticulum membranes of newly synthesized membrane proteins. Preferentially accommodates proteins with transmembrane domains that are weakly hydrophobic or contain destabilizing features such as charged and aromatic residues. Involved in the cotranslational insertion of multi-pass membrane proteins in which stop-transfer membrane-anchor sequences become ER membrane spanning helices. It is also required for the post-translational insertion of tail-anchored/TA proteins in endoplasmic reticulum membranes. By mediating the proper cotranslational insertion of N-terminal transmembrane domains in an N-exo topology, with translocated N-terminus in the lumen of the ER, controls the topology of multi-pass membrane proteins. By regulating the insertion of various proteins in membranes, it is indirectly involved in many cellular processes. The polypeptide is ER membrane protein complex subunit 2-B (emc2-b) (Xenopus laevis (African clawed frog)).